We begin with the raw amino-acid sequence, 371 residues long: Histidinol-phosphate aminotransferase 2 (371 aa).

Lysine 232 carries the N6-(pyridoxal phosphate)lysine modification.

The protein belongs to the class-II pyridoxal-phosphate-dependent aminotransferase family. Histidinol-phosphate aminotransferase subfamily. In terms of assembly, homodimer. Requires pyridoxal 5'-phosphate as cofactor.

The catalysed reaction is L-histidinol phosphate + 2-oxoglutarate = 3-(imidazol-4-yl)-2-oxopropyl phosphate + L-glutamate. It functions in the pathway amino-acid biosynthesis; L-histidine biosynthesis; L-histidine from 5-phospho-alpha-D-ribose 1-diphosphate: step 7/9. This chain is Histidinol-phosphate aminotransferase 2, found in Methylococcus capsulatus (strain ATCC 33009 / NCIMB 11132 / Bath).